We begin with the raw amino-acid sequence, 488 residues long: Ribulose bisphosphate carboxylase large chain (488 aa).

Substrate-binding residues include Asn128 and Thr178. Residue Lys180 is the Proton acceptor of the active site. Position 182 (Lys182) interacts with substrate. Lys206, Asp208, and Glu209 together coordinate Mg(2+). An N6-carboxylysine modification is found at Lys206. The active-site Proton acceptor is His298. Positions 299, 331, and 383 each coordinate substrate.

Belongs to the RuBisCO large chain family. Type I subfamily. Heterohexadecamer of 8 large chains and 8 small chains. Mg(2+) is required as a cofactor.

The enzyme catalyses 2 (2R)-3-phosphoglycerate + 2 H(+) = D-ribulose 1,5-bisphosphate + CO2 + H2O. The catalysed reaction is D-ribulose 1,5-bisphosphate + O2 = 2-phosphoglycolate + (2R)-3-phosphoglycerate + 2 H(+). RuBisCO catalyzes two reactions: the carboxylation of D-ribulose 1,5-bisphosphate, the primary event in carbon dioxide fixation, as well as the oxidative fragmentation of the pentose substrate. Both reactions occur simultaneously and in competition at the same active site. In Xanthobacter flavus, this protein is Ribulose bisphosphate carboxylase large chain.